Reading from the N-terminus, the 318-residue chain is NADH-ubiquinone oxidoreductase chain 1 (318 aa).

8 helical membrane-spanning segments follow: residues 2–22 (FLMN…FLTL), 70–90 (MFIL…IPMP), 100–120 (LGVL…LWSG), 136–156 (VAQT…IMML), 171–191 (HLWL…STLA), 231–251 (IIMM…NPLF), 253–273 (ELFT…FLWV), and 294–314 (LPLT…LAGI).

The protein belongs to the complex I subunit 1 family.

The protein resides in the mitochondrion inner membrane. It catalyses the reaction a ubiquinone + NADH + 5 H(+)(in) = a ubiquinol + NAD(+) + 4 H(+)(out). Core subunit of the mitochondrial membrane respiratory chain NADH dehydrogenase (Complex I) that is believed to belong to the minimal assembly required for catalysis. Complex I functions in the transfer of electrons from NADH to the respiratory chain. The immediate electron acceptor for the enzyme is believed to be ubiquinone. The polypeptide is NADH-ubiquinone oxidoreductase chain 1 (MT-ND1) (Priodontes maximus (Giant armadillo)).